Reading from the N-terminus, the 403-residue chain is Protein STRICTOSIDINE SYNTHASE-LIKE 13 (403 aa).

The signal sequence occupies residues 1-42 (MEKKGQHGTYESMMTHHPILCIIALSVLFIAIDPFHMSPIGG). Residues asparagine 66 and asparagine 206 are each glycosylated (N-linked (GlcNAc...) asparagine).

Belongs to the strictosidine synthase family.

It is found in the vacuole. Required for the exine formation during pollen development. This chain is Protein STRICTOSIDINE SYNTHASE-LIKE 13, found in Arabidopsis thaliana (Mouse-ear cress).